Reading from the N-terminus, the 153-residue chain is Neuromedin-S (153 aa).

Positions 1-26 (MKHLRPQFPLILAIYCFCMLQIPSSG) are cleaved as a signal peptide. 3 consecutive propeptides follow at residues 27–69 (FPQP…IYKR), 70–105 (FLFH…ANRR), and 106–108 (MKR). Asparagine amide is present on Asn-141. Positions 144–153 (NIEDEAQIQW) are excised as a propeptide.

This sequence belongs to the NmU family.

Its subcellular location is the secreted. In terms of biological role, implicated in the regulation of circadian rhythms through autocrine and/or paracrine actions. The polypeptide is Neuromedin-S (NMS) (Homo sapiens (Human)).